We begin with the raw amino-acid sequence, 208 residues long: Ribosomal RNA small subunit methyltransferase G (208 aa).

S-adenosyl-L-methionine contacts are provided by residues G76, L81, 127–128, and R142; that span reads VE.

This sequence belongs to the methyltransferase superfamily. RNA methyltransferase RsmG family.

It is found in the cytoplasm. The catalysed reaction is guanosine(527) in 16S rRNA + S-adenosyl-L-methionine = N(7)-methylguanosine(527) in 16S rRNA + S-adenosyl-L-homocysteine. In terms of biological role, specifically methylates the N7 position of guanine in position 527 of 16S rRNA. The polypeptide is Ribosomal RNA small subunit methyltransferase G (Legionella pneumophila (strain Corby)).